A 286-amino-acid chain; its full sequence is ATP phosphoribosyltransferase (286 aa).

The protein belongs to the ATP phosphoribosyltransferase family. Long subfamily. Mg(2+) serves as cofactor.

The protein localises to the cytoplasm. It carries out the reaction 1-(5-phospho-beta-D-ribosyl)-ATP + diphosphate = 5-phospho-alpha-D-ribose 1-diphosphate + ATP. It participates in amino-acid biosynthesis; L-histidine biosynthesis; L-histidine from 5-phospho-alpha-D-ribose 1-diphosphate: step 1/9. With respect to regulation, feedback inhibited by histidine. Functionally, catalyzes the condensation of ATP and 5-phosphoribose 1-diphosphate to form N'-(5'-phosphoribosyl)-ATP (PR-ATP). Has a crucial role in the pathway because the rate of histidine biosynthesis seems to be controlled primarily by regulation of HisG enzymatic activity. The protein is ATP phosphoribosyltransferase of Arthrobacter sp. (strain FB24).